Consider the following 230-residue polypeptide: MFAAIQPGLAEGAQYPGSLPPGVCQPDLQPDNNSNFVESAKDANKNWHGVPGKVDPILIRSSSESPSDNQVFQATRLPEAGVRSPPEGAEIPGAEPEKLSGASSVCSPLEDIGYASSSLSIDSFSSSPEPVCDTPRGPSPLDPLLPSVAQAVQQLQAQERYKEQEKEKHHAHLVMYRRLALLQWIRALQHQLVDQQARLQESFDTILDNRKELIRCLQQREAPCRHQDQG.

Residues Met1–Ser103 are disordered. A compositionally biased stretch (polar residues) spans Arg60–Gln73. The segment covering Pro85–Ala94 has biased composition (low complexity).

Belongs to the UPF0500 family.

The protein is UPF0500 protein C1orf216 homolog of Mus musculus (Mouse).